Consider the following 443-residue polypeptide: Chromosomal replication initiator protein DnaA (443 aa).

Residues 1-80 (MTSQFASLWQ…LGESVEVRFF (80 aa)) are domain I, interacts with DnaA modulators. A domain II region spans residues 80 to 104 (FTPSADSRRSEPSRRPVATEESSPP). The tract at residues 83–105 (SADSRRSEPSRRPVATEESSPPL) is disordered. Positions 85 to 97 (DSRRSEPSRRPVA) are enriched in basic and acidic residues. Positions 105 to 321 (LLNPKYTFDT…GALNRVIAYA (217 aa)) are domain III, AAA+ region. Residues Gly149, Gly151, Lys152, and Thr153 each contribute to the ATP site. The domain IV, binds dsDNA stretch occupies residues 322–443 (NLSGKSLTSE…QVLKEKIQRA (122 aa)).

The protein belongs to the DnaA family. As to quaternary structure, oligomerizes as a right-handed, spiral filament on DNA at oriC.

The protein resides in the cytoplasm. Functionally, plays an essential role in the initiation and regulation of chromosomal replication. ATP-DnaA binds to the origin of replication (oriC) to initiate formation of the DNA replication initiation complex once per cell cycle. Binds the DnaA box (a 9 base pair repeat at the origin) and separates the double-stranded (ds)DNA. Forms a right-handed helical filament on oriC DNA; dsDNA binds to the exterior of the filament while single-stranded (ss)DNA is stabiized in the filament's interior. The ATP-DnaA-oriC complex binds and stabilizes one strand of the AT-rich DNA unwinding element (DUE), permitting loading of DNA polymerase. After initiation quickly degrades to an ADP-DnaA complex that is not apt for DNA replication. Binds acidic phospholipids. This chain is Chromosomal replication initiator protein DnaA, found in Heliobacterium modesticaldum (strain ATCC 51547 / Ice1).